A 102-amino-acid chain; its full sequence is Co-chaperonin GroES (102 aa).

This sequence belongs to the GroES chaperonin family. In terms of assembly, heptamer of 7 subunits arranged in a ring. Interacts with the chaperonin GroEL.

It localises to the cytoplasm. In terms of biological role, together with the chaperonin GroEL, plays an essential role in assisting protein folding. The GroEL-GroES system forms a nano-cage that allows encapsulation of the non-native substrate proteins and provides a physical environment optimized to promote and accelerate protein folding. GroES binds to the apical surface of the GroEL ring, thereby capping the opening of the GroEL channel. The protein is Co-chaperonin GroES of Chlamydia trachomatis serovar D (strain ATCC VR-885 / DSM 19411 / UW-3/Cx).